A 585-amino-acid polypeptide reads, in one-letter code: Arginine--tRNA ligase (585 aa).

Positions 131-141 match the 'HIGH' region motif; that stretch reads ANPTGPMHVGH.

It belongs to the class-I aminoacyl-tRNA synthetase family. In terms of assembly, monomer.

It localises to the cytoplasm. It carries out the reaction tRNA(Arg) + L-arginine + ATP = L-arginyl-tRNA(Arg) + AMP + diphosphate. The sequence is that of Arginine--tRNA ligase from Brucella canis (strain ATCC 23365 / NCTC 10854 / RM-666).